The following is a 582-amino-acid chain: PX domain-containing protein kinase-like protein (582 aa).

The 113-residue stretch at 14–126 folds into the PX domain; the sequence is LDDTVPLTAA…KFLDPNNYSA (113 aa). Positions 88–481 constitute a Protein kinase domain; sequence FIAERQRGLQ…VENSEEQPVK (394 aa). A disordered region spans residues 433–550; that stretch reads EQKQIHQHRR…APFLPQPVNG (118 aa). Basic residues-rich tracts occupy residues 437 to 448 and 457 to 469; these read IHQHRRLTRAQS and KRRK…KSKR. The span at 483–514 shows a compositional bias: low complexity; that stretch reads SNSNNSAGSGASSPLTSPSSPTPPSTAGLSSA. Pro residues predominate over residues 515–531; the sequence is LPPPPPPPPPPPPPAGP. Residues 548 to 567 enclose the WH2 domain; that stretch reads VNGVNRGALLSSIQNFQKGT.

It belongs to the protein kinase superfamily. In terms of tissue distribution, isoform 1 is present in all tissues examined. Isoform 2 is found in all tissues except skeletal muscle and very low levels in spleen. Both isoforms are widely expressed throughout the nervous system however levels of isoform 2 are higher in purified hippocampal and cortical neurons whereas glial cells express more isoform 1 than isoform 2.

It is found in the cytoplasm. Its subcellular location is the cell membrane. Its function is as follows. Binds to and modulates brain Na,K-ATPase subunits ATP1B1 and ATP1B3 and may thereby participate in the regulation of electrical excitability and synaptic transmission. May not display kinase activity. The polypeptide is PX domain-containing protein kinase-like protein (Mus musculus (Mouse)).